The sequence spans 652 residues: Acetyl-coenzyme A synthetase (652 aa).

Residues 191 to 194, threonine 311, and asparagine 335 each bind CoA; that span reads RAGR. ATP contacts are provided by residues 387–389, 411–416, aspartate 500, and arginine 515; these read GEP and DTWWQT. Residue serine 523 coordinates CoA. ATP is bound at residue arginine 526. The Mg(2+) site is built by valine 537, histidine 539, and isoleucine 542. Arginine 584 lines the CoA pocket. Lysine 609 carries the post-translational modification N6-acetyllysine.

It belongs to the ATP-dependent AMP-binding enzyme family. Mg(2+) is required as a cofactor. In terms of processing, acetylated. Deacetylation by the SIR2-homolog deacetylase activates the enzyme.

It carries out the reaction acetate + ATP + CoA = acetyl-CoA + AMP + diphosphate. Catalyzes the conversion of acetate into acetyl-CoA (AcCoA), an essential intermediate at the junction of anabolic and catabolic pathways. Acs undergoes a two-step reaction. In the first half reaction, Acs combines acetate with ATP to form acetyl-adenylate (AcAMP) intermediate. In the second half reaction, it can then transfer the acetyl group from AcAMP to the sulfhydryl group of CoA, forming the product AcCoA. Functionally, enables the cell to use acetate during aerobic growth to generate energy via the TCA cycle, and biosynthetic compounds via the glyoxylate shunt. Acetylates CheY, the response regulator involved in flagellar movement and chemotaxis. The protein is Acetyl-coenzyme A synthetase of Sodalis glossinidius (strain morsitans).